We begin with the raw amino-acid sequence, 226 residues long: Glutathione peroxidase 3 (226 aa).

The signal sequence occupies residues 1–24 (MARLLQASCLLSLLLAGFVPQSRG). The active site involves Sec-73. Residue Sec-73 is a non-standard amino acid, selenocysteine.

It belongs to the glutathione peroxidase family. Homotetramer. Secreted in plasma.

It localises to the secreted. The catalysed reaction is 2 glutathione + H2O2 = glutathione disulfide + 2 H2O. It carries out the reaction tert-butyl hydroperoxide + 2 glutathione = tert-butanol + glutathione disulfide + H2O. In terms of biological role, protects cells and enzymes from oxidative damage, by catalyzing the reduction of hydrogen peroxide, lipid peroxides and organic hydroperoxide, by glutathione. The chain is Glutathione peroxidase 3 from Pongo pygmaeus (Bornean orangutan).